The chain runs to 559 residues: T-complex protein 1 subunit gamma (559 aa).

An intrachain disulfide couples C368 to C374. The tract at residues 531-559 is disordered; it reads KDKRGGAGQRGGDRGQGDQEETFGDQRDG.

Belongs to the TCP-1 chaperonin family. Heterooligomeric complex of about 850 to 900 kDa that forms two stacked rings, 12 to 16 nm in diameter.

The protein resides in the cytoplasm. Its function is as follows. Molecular chaperone; assists the folding of proteins upon ATP hydrolysis. Known to play a role, in vitro, in the folding of actin and tubulin. The protein is T-complex protein 1 subunit gamma of Oxytricha granulifera (Ciliate).